The sequence spans 186 residues: Peptidyl-tRNA hydrolase (186 aa).

Tyr14 is a tRNA binding site. The Proton acceptor role is filled by His19. TRNA-binding residues include Phe65, Asn67, and Asn113.

The protein belongs to the PTH family. Monomer.

It localises to the cytoplasm. It catalyses the reaction an N-acyl-L-alpha-aminoacyl-tRNA + H2O = an N-acyl-L-amino acid + a tRNA + H(+). Functionally, hydrolyzes ribosome-free peptidyl-tRNAs (with 1 or more amino acids incorporated), which drop off the ribosome during protein synthesis, or as a result of ribosome stalling. In terms of biological role, catalyzes the release of premature peptidyl moieties from peptidyl-tRNA molecules trapped in stalled 50S ribosomal subunits, and thus maintains levels of free tRNAs and 50S ribosomes. The chain is Peptidyl-tRNA hydrolase from Limosilactobacillus fermentum (strain NBRC 3956 / LMG 18251) (Lactobacillus fermentum).